Here is a 45-residue protein sequence, read N- to C-terminus: DNA-directed RNA polymerase subunit Rpo12 (45 aa).

Zn(2+) is bound by residues C8, C23, and C26.

Belongs to the archaeal Rpo12/eukaryotic RPC10 RNA polymerase subunit family. As to quaternary structure, part of the RNA polymerase complex. Zn(2+) serves as cofactor.

It is found in the cytoplasm. The catalysed reaction is RNA(n) + a ribonucleoside 5'-triphosphate = RNA(n+1) + diphosphate. Its function is as follows. DNA-dependent RNA polymerase (RNAP) catalyzes the transcription of DNA into RNA using the four ribonucleoside triphosphates as substrates. The polypeptide is DNA-directed RNA polymerase subunit Rpo12 (Methanosarcina acetivorans (strain ATCC 35395 / DSM 2834 / JCM 12185 / C2A)).